The following is a 438-amino-acid chain: Putative formin-like protein 21a (438 aa).

A disordered region spans residues 1–74; it reads MSPVEISGAD…RVLPRPPPPP (74 aa). Over residues 22–61 the composition is skewed to pro residues; sequence PLPPPPPPPPPPMRRRAPLPPPPPPPMRRRAPLPPPPPPA. The FH2 domain maps to 124-438; it reads FPCPSKKKSS…SYGYFDQPWI (315 aa).

Belongs to the formin-like family. Class-II subfamily.

This chain is Putative formin-like protein 21a (FH21A), found in Arabidopsis thaliana (Mouse-ear cress).